The chain runs to 852 residues: Mannosyl-oligosaccharide glucosidase GCS1 (852 aa).

The segment at 1-31 is disordered; it reads MTGASRRSARGRIKSSSLSPGSDEGSAYPPS. Residues 1 to 51 are Cytoplasmic-facing; the sequence is MTGASRRSARGRIKSSSLSPGSDEGSAYPPSIRRGKGKELVSIGAFKTNLK. Residues 6–12 carry the Endoplasmic reticulum targeting motif; that stretch reads RRSARGR. Residues 15 to 26 show a composition bias toward low complexity; that stretch reads SSSLSPGSDEGS. Residues 52 to 72 traverse the membrane as a helical; Signal-anchor for type II membrane protein segment; that stretch reads ILVGLIILGIIVIYFVINRLV. Over 73–852 the chain is Lumenal; sequence RHGLLFDESQ…LIMSEDYPIF (780 aa). Residues 91-150 are required for endoplasmic reticulum targeting; the sequence is PAPKVMDLSMFQGEHKESLYWGTYRPHVYFGVRARTPLSLVAGLMWLGVKDEMYVMRHFC. Asparagine 282, asparagine 552, and asparagine 570 each carry an N-linked (GlcNAc...) asparagine glycan. A compositionally biased stretch (polar residues) spans 574 to 583; it reads QELNPKTLSS. The interval 574-593 is disordered; it reads QELNPKTLSSGLDDYPRASH. Aspartate 586 acts as the Proton donor in catalysis. Residues asparagine 633, asparagine 662, and asparagine 730 are each glycosylated (N-linked (GlcNAc...) asparagine). Glutamate 819 serves as the catalytic Proton acceptor.

It belongs to the glycosyl hydrolase 63 family. As to expression, constitutively expressed in roots, stems, leaves, flowers and siliques.

Its subcellular location is the endoplasmic reticulum membrane. It catalyses the reaction N(4)-(alpha-D-Glc-(1-&gt;2)-alpha-D-Glc-(1-&gt;3)-alpha-D-Glc-(1-&gt;3)-alpha-D-Man-(1-&gt;2)-alpha-D-Man-(1-&gt;2)-alpha-D-Man-(1-&gt;3)-[alpha-D-Man-(1-&gt;2)-alpha-D-Man-(1-&gt;3)-[alpha-D-Man-(1-&gt;2)-alpha-D-Man-(1-&gt;6)]-alpha-D-Man-(1-&gt;6)]-beta-D-Man-(1-&gt;4)-beta-D-GlcNAc-(1-&gt;4)-beta-D-GlcNAc)-L-asparaginyl-[protein] + H2O = N(4)-(alpha-D-Glc-(1-&gt;3)-alpha-D-Glc-(1-&gt;3)-alpha-D-Man-(1-&gt;2)-alpha-D-Man-(1-&gt;2)-alpha-D-Man-(1-&gt;3)-[alpha-D-Man-(1-&gt;2)-alpha-D-Man-(1-&gt;3)-[alpha-D-Man-(1-&gt;2)-alpha-D-Man-(1-&gt;6)]-alpha-D-Man-(1-&gt;6)]-beta-D-Man-(1-&gt;4)-beta-D-GlcNAc-(1-&gt;4)-beta-D-GlcNAc)-L-asparaginyl-[protein] + beta-D-glucose. It participates in glycan metabolism; N-glycan degradation. Its function is as follows. Cleaves the distal alpha 1,2-linked glucose residue from the Glc(3)Man(9)GlcNAc(2) oligosaccharide precursor. Required for the accumulation of seed storage proteins, the formation of protein bodies, cell differentiation, cellulose biosynthesis and organization (in cell walls), cell shape determination and organization (e.g. epidermal cells), and embryo development. Involved in root development. In Arabidopsis thaliana (Mouse-ear cress), this protein is Mannosyl-oligosaccharide glucosidase GCS1 (GCS1).